A 595-amino-acid polypeptide reads, in one-letter code: Polyadenylate-binding protein-interacting protein 4 (595 aa).

Residues 48–113 enclose the Sm domain; it reads RLVYFTTCKI…SRSEFVRKPP (66 aa). Polar residues-rich tracts occupy residues 302–313 and 326–346; these read GGSSTSDGQKPA and GDSQ…TSKQ. Disordered stretches follow at residues 302 to 505 and 536 to 595; these read GGSS…FYYP and MYHP…KGRE. Residues 364-382 are compositionally biased toward basic and acidic residues; sequence DEQRRKNNEEVSHNNRSAE. Low complexity predominate over residues 416-465; it reads SQVSSKTKSESSFGQSASRSSESRPGPSTSSRPGLSPSSSIGSMASSEKS. Residues 466–474 carry the PAM2-like 1; degenerate motif; that stretch reads TLNPNAKEF. Residues 475-485 carry the PAM2-like 2 motif; the sequence is KLNPKAKSFKP. Composition is skewed to low complexity over residues 488–501 and 548–570; these read SAAA…ADAS and QPQY…PGQQ.

Expressed in cauline leaves, stems, rosette leaves, immature siliques and primary inflorescences.

The sequence is that of Polyadenylate-binding protein-interacting protein 4 (CID4) from Arabidopsis thaliana (Mouse-ear cress).